The chain runs to 465 residues: Iron-sulfur cluster assembly SufBD family protein SSP1857 (465 aa).

Belongs to the iron-sulfur cluster assembly SufBD family.

This Staphylococcus saprophyticus subsp. saprophyticus (strain ATCC 15305 / DSM 20229 / NCIMB 8711 / NCTC 7292 / S-41) protein is Iron-sulfur cluster assembly SufBD family protein SSP1857.